Consider the following 305-residue polypeptide: HPr kinase/phosphorylase (305 aa).

Active-site residues include histidine 136 and lysine 157. 151-158 (GESGIGKS) is a binding site for ATP. Serine 158 contacts Mg(2+). The active-site Proton acceptor; for phosphorylation activity. Proton donor; for dephosphorylation activity is the aspartate 175. Residues 198–207 (LEVRGLGIID) are important for the catalytic mechanism of both phosphorylation and dephosphorylation. Glutamate 199 is a binding site for Mg(2+). Arginine 240 is an active-site residue. The tract at residues 261–266 (PIRPGR) is important for the catalytic mechanism of dephosphorylation.

This sequence belongs to the HPrK/P family. In terms of assembly, homohexamer. Mg(2+) is required as a cofactor.

The catalysed reaction is [HPr protein]-L-serine + ATP = [HPr protein]-O-phospho-L-serine + ADP + H(+). The enzyme catalyses [HPr protein]-O-phospho-L-serine + phosphate + H(+) = [HPr protein]-L-serine + diphosphate. Catalyzes the ATP- as well as the pyrophosphate-dependent phosphorylation of a specific serine residue in HPr, a phosphocarrier protein of the phosphoenolpyruvate-dependent sugar phosphotransferase system (PTS). HprK/P also catalyzes the pyrophosphate-producing, inorganic phosphate-dependent dephosphorylation (phosphorolysis) of seryl-phosphorylated HPr (P-Ser-HPr). The two antagonistic activities of HprK/P are regulated by several intracellular metabolites, which change their concentration in response to the absence or presence of rapidly metabolisable carbon sources (glucose, fructose, etc.) in the growth medium. Therefore, by controlling the phosphorylation state of HPr, HPrK/P is a sensor enzyme that plays a major role in the regulation of carbon metabolism and sugar transport: it mediates carbon catabolite repression (CCR), and regulates PTS-catalyzed carbohydrate uptake and inducer exclusion. This chain is HPr kinase/phosphorylase, found in Clostridium tetani (strain Massachusetts / E88).